Reading from the N-terminus, the 312-residue chain is Olfactory receptor 6B2 (312 aa).

At 1-25 the chain is on the extracellular side; that stretch reads MSGENVTKVSTFILVGLPTAPGLQY. Asn-5 is a glycosylation site (N-linked (GlcNAc...) asparagine). The helical transmembrane segment at 26–46 threads the bilayer; the sequence is LLFLLFLLTYLFVLVENLAII. The Cytoplasmic segment spans residues 47 to 54; the sequence is LIVWSSTS. The helical transmembrane segment at 55 to 75 threads the bilayer; that stretch reads LHRPMYYFLSSMSFLEIWYVS. Residues 76–99 are Extracellular-facing; the sequence is DITPKMLEGFLLQQKRISFVGCMT. The cysteines at positions 97 and 189 are disulfide-linked. The helical transmembrane segment at 100-120 threads the bilayer; sequence QLYFFSSLVCTECVLLASMAY. Residues 121–139 lie on the Cytoplasmic side of the membrane; the sequence is DRYVAICHPLRYHVLVTPG. The helical transmembrane segment at 140–160 threads the bilayer; sequence LCLQLVGFSFVSGFTISMIKV. Residues 161 to 196 lie on the Extracellular side of the membrane; that stretch reads CFISSVTFCGSNVLNHFFCDISPILKLACTDFSTAE. A helical transmembrane segment spans residues 197 to 217; the sequence is LVDFILAFIILVFPLLATILS. Residues 218–237 lie on the Cytoplasmic side of the membrane; it reads YWHITLAVLRIPSATGCWRA. The helical transmembrane segment at 238 to 258 threads the bilayer; it reads FSTCASHLTVVTVFYTALLFM. Residues 259 to 271 are Extracellular-facing; it reads YVRPQAIDSQSSN. The helical transmembrane segment at 272-292 threads the bilayer; sequence KLISAVYTVVTPIINPLIYCL. Over 293-312 the chain is Cytoplasmic; it reads RNKEFKDALKKALGLGQTSH.

It belongs to the G-protein coupled receptor 1 family.

Its subcellular location is the cell membrane. Functionally, odorant receptor. This is Olfactory receptor 6B2 (OR6B2) from Homo sapiens (Human).